Consider the following 219-residue polypeptide: ADP-sugar pyrophosphatase (219 aa).

Residue methionine 1 is modified to N-acetylmethionine. A phosphoserine mark is found at serine 3 and serine 10. Tryptophan 28 lines the substrate pocket. Lysine 42 is covalently cross-linked (Glycyl lysine isopeptide (Lys-Gly) (interchain with G-Cter in SUMO2)). Position 45 is a phosphothreonine (threonine 45). Residues 46 to 47 and arginine 51 contribute to the substrate site; that span reads WE. Residues 57–197 form the Nudix hydrolase domain; sequence QTADGVAVIP…EEHLTVDARV (141 aa). A Phosphotyrosine modification is found at tyrosine 74. Arginine 84 contacts substrate. Alanine 96 lines the Mg(2+) pocket. Residues 97–118 carry the Nudix box motif; that stretch reads GLIDDGETPEAAALRELEEETG. Leucine 98 lines the substrate pocket. Mg(2+) is bound by residues glutamate 112 and glutamate 116. Aspartate 133 contributes to the substrate binding site. Glutamate 166 provides a ligand contact to Mg(2+). 2 positions are modified to N6-acetyllysine: lysine 210 and lysine 218.

This sequence belongs to the Nudix hydrolase family. In terms of assembly, homodimer. Interacts with PARG. Mg(2+) serves as cofactor. In terms of processing, phosphorylation at Thr-45 is required for homodimer stability; dephosphorylation results in destabilization of the homodimer. Dephosphorylation at Thr-45 promotes the ATP-synthesis activity. Widely expressed. Most abundant in liver.

Its subcellular location is the nucleus. The catalysed reaction is D-ribose 5-phosphate + ATP + H(+) = ADP-D-ribose + diphosphate. The enzyme catalyses ADP-D-ribose + H2O = D-ribose 5-phosphate + AMP + 2 H(+). It carries out the reaction 8-oxo-dGDP + H2O = 8-oxo-dGMP + phosphate + H(+). Enzyme that can either act as an ADP-sugar pyrophosphatase in absence of diphosphate or catalyze the synthesis of ATP in presence of diphosphate. In absence of diphosphate, hydrolyzes with similar activities various modified nucleoside diphosphates such as ADP-ribose, ADP-mannose, ADP-glucose, 8-oxo-GDP and 8-oxo-dGDP. Can also hydrolyze other nucleotide sugars with low activity. In presence of diphosphate, mediates the synthesis of ATP in the nucleus by catalyzing the conversion of ADP-ribose to ATP and ribose 5-phosphate. Nuclear ATP synthesis takes place when dephosphorylated at Thr-45. Nuclear ATP generation is required for extensive chromatin remodeling events that are energy-consuming. Does not play a role in U8 snoRNA decapping activity. Binds U8 snoRNA. The chain is ADP-sugar pyrophosphatase (NUDT5) from Homo sapiens (Human).